The sequence spans 315 residues: Tetraacyldisaccharide 4'-kinase (315 aa).

ATP is bound at residue 45 to 52; it reads SVGGSGKT.

The protein belongs to the LpxK family.

It catalyses the reaction a lipid A disaccharide + ATP = a lipid IVA + ADP + H(+). The protein operates within glycolipid biosynthesis; lipid IV(A) biosynthesis; lipid IV(A) from (3R)-3-hydroxytetradecanoyl-[acyl-carrier-protein] and UDP-N-acetyl-alpha-D-glucosamine: step 6/6. Transfers the gamma-phosphate of ATP to the 4'-position of a tetraacyldisaccharide 1-phosphate intermediate (termed DS-1-P) to form tetraacyldisaccharide 1,4'-bis-phosphate (lipid IVA). In Aquifex aeolicus (strain VF5), this protein is Tetraacyldisaccharide 4'-kinase.